Consider the following 262-residue polypeptide: Type II restriction enzyme MspI (262 aa).

It carries out the reaction Endonucleolytic cleavage of DNA to give specific double-stranded fragments with terminal 5'-phosphates.. In terms of biological role, a P subtype restriction enzyme that recognizes the double-stranded sequence 5'-CCGG-3' and cleaves after C-1. The protein is Type II restriction enzyme MspI (mspIR) of Moraxella sp.